Consider the following 461-residue polypeptide: A-type ATP synthase subunit B (461 aa).

This sequence belongs to the ATPase alpha/beta chains family. As to quaternary structure, has multiple subunits with at least A(3), B(3), C, D, E, F, H, I and proteolipid K(x).

The protein localises to the cell membrane. Component of the A-type ATP synthase that produces ATP from ADP in the presence of a proton gradient across the membrane. The B chain is a regulatory subunit. The sequence is that of A-type ATP synthase subunit B from Methanoculleus marisnigri (strain ATCC 35101 / DSM 1498 / JR1).